A 496-amino-acid polypeptide reads, in one-letter code: DEAD-box ATP-dependent RNA helicase 38 (496 aa).

The disordered stretch occupies residues 1–91; sequence MADTVEKVPT…SGDTPYTSAS (91 aa). An N-acetylalanine modification is found at Ala2. Over residues 7–25 the composition is skewed to low complexity; it reads KVPTVVESSSSSTVEASNS. The span at 27 to 40 shows a compositional bias: basic and acidic residues; sequence EKTEPTTEKKKWGD. Acidic residues predominate over residues 41 to 51; the sequence is VEDDDDEEEAV. A compositionally biased stretch (polar residues) spans 78–91; it reads KAVTSGDTPYTSAS. Positions 91-120 match the Q motif motif; sequence SRFEDLNLSPELMKGLYVEMKFEKPSKIQA. One can recognise a Helicase ATP-binding domain in the interval 125–301; sequence MIMTPPHKHL…ARTVKDPNQL (177 aa). 138–145 is a binding site for ATP; sequence AHNGSGKT. The short motif at 245-248 is the DEAD box element; sequence DEAD. A Helicase C-terminal domain is found at 329-483; the sequence is VIKDQIMELG…EIKSWNSEEE (155 aa).

This sequence belongs to the DEAD box helicase family. DDX19/DBP5 subfamily. Interacts with NUP214 (via N-terminus). As to expression, constitutively expressed.

The protein resides in the cytoplasm. It is found in the nucleus. It catalyses the reaction ATP + H2O = ADP + phosphate + H(+). ATP-dependent RNA helicase essential for mRNA export from the nucleus. Plays an important role in the positive regulation of CBF/DREB transcription factors. This is DEAD-box ATP-dependent RNA helicase 38 (RH38) from Arabidopsis thaliana (Mouse-ear cress).